The chain runs to 453 residues: Homogentisate 1,2-dioxygenase (453 aa).

His306 (proton acceptor) is an active-site residue. The Fe cation site is built by His349 and Glu355. Residues Tyr364 and His385 each contribute to the homogentisate site. His385 is a Fe cation binding site.

This sequence belongs to the homogentisate dioxygenase family. As to quaternary structure, hexamer; dimer of trimers. Fe cation serves as cofactor.

The catalysed reaction is homogentisate + O2 = 4-maleylacetoacetate + H(+). It participates in amino-acid degradation; L-phenylalanine degradation; acetoacetate and fumarate from L-phenylalanine: step 4/6. Its function is as follows. Involved in the catabolism of homogentisate (2,5-dihydroxyphenylacetate or 2,5-OH-PhAc), a central intermediate in the degradation of phenylalanine and tyrosine. Catalyzes the oxidative ring cleavage of the aromatic ring of homogentisate to yield maleylacetoacetate. This chain is Homogentisate 1,2-dioxygenase, found in Rhizobium leguminosarum bv. trifolii (strain WSM2304).